A 251-amino-acid chain; its full sequence is uncharacterized protein (251 aa).

Residue 10 to 34 (ITGAGSGIGKKAAVMFAERGAKVAI) participates in NADP(+) binding. Ser139 provides a ligand contact to substrate. Tyr152 (proton acceptor) is an active-site residue.

Belongs to the short-chain dehydrogenases/reductases (SDR) family.

This is an uncharacterized protein from Thermotoga maritima (strain ATCC 43589 / DSM 3109 / JCM 10099 / NBRC 100826 / MSB8).